The following is a 424-amino-acid chain: UDP-N-acetylglucosamine 1-carboxyvinyltransferase (424 aa).

22-23 contributes to the phosphoenolpyruvate binding site; the sequence is KN. Arg-93 is a UDP-N-acetyl-alpha-D-glucosamine binding site. The active-site Proton donor is the Cys-117. Cys-117 carries the post-translational modification 2-(S-cysteinyl)pyruvic acid O-phosphothioketal. UDP-N-acetyl-alpha-D-glucosamine-binding positions include 122-126, Asp-307, and Ile-329; that span reads RPIDL.

The protein belongs to the EPSP synthase family. MurA subfamily.

It is found in the cytoplasm. The enzyme catalyses phosphoenolpyruvate + UDP-N-acetyl-alpha-D-glucosamine = UDP-N-acetyl-3-O-(1-carboxyvinyl)-alpha-D-glucosamine + phosphate. Its pathway is cell wall biogenesis; peptidoglycan biosynthesis. Cell wall formation. Adds enolpyruvyl to UDP-N-acetylglucosamine. In Chlorobium phaeovibrioides (strain DSM 265 / 1930) (Prosthecochloris vibrioformis (strain DSM 265)), this protein is UDP-N-acetylglucosamine 1-carboxyvinyltransferase.